Reading from the N-terminus, the 710-residue chain is MLLIALNTDLRTTGKKFLPNDINGGKVEKVNGPCVLQIQKIRNISAPKDNEESQAAPRMLRLQLTDGHTSCTAIELNYLSKISLNTPPGTKIKLLGTIEVKNGYLLLDDTNTVVLGGEVEHLIEKWELQRSLSKHSRSNIGIEGGPPPFVPFGQRCASVASVDSKELDSRKTLQASSVTKPVGENDEFEKQRTAAIAEVAKSKETKTFGGGGNAGSNLNPGAGGSRNKEVFQKEKIIRAEGKSEGVYRELVDEKALRHITEMGFSKDAARQALMDHSNNVEAALNSLLTGNKSKPVQGPPARGKGKGRGRTRAEEDDELTSARPSAPSTLFDFLESKMGSFSIEDHKLQSQSQSQVHQKPLNLEQNGIKDYNHKDYNQPRQFTRNDTRAPRNEKPPRFQKEIQASRQYEGNGPPKSRGSEKQSSSVAEQWMEERNKCERGYPRNDRLKDFSHLPSSHQNEGSYKKSYTNPMQGRGMKGGNHTEVKEEFHHQNSNTEGSHQKRGKKDDQRYNSEFYTDRRARTGNTETFTNIPNEKCFSANNELSNFQTILIKDGANDLSNGEVDQKARRFGPIKPIGTNLNSSHEDKSKMFSYNNAKKRSGPIKQERPLEAVYSGFSWRPGDECLALYWEDNKYYRAEVEALHSSGTTAVVKFSDYGNYEEVLLENIRPIQAEAWEEEGDFGDFRRGGDGQPRRSTRPTQQFYQPPRARN.

Disordered regions lie at residues 206–227, 288–328, and 369–515; these read KTFGGGGNAGSNLNPGAGGSRN, LTGN…SAPS, and KDYN…SEFY. One can recognise a UBA domain in the interval 250-290; the sequence is LVDEKALRHITEMGFSKDAARQALMDHSNNVEAALNSLLTG. Basic and acidic residues-rich tracts occupy residues 370–400 and 431–451; these read DYNHKDYNQPRQFTRNDTRAPRNEKPPRFQK and MEERNKCERGYPRNDRLKDFS. Positions 453-471 are enriched in polar residues; that stretch reads LPSSHQNEGSYKKSYTNPM. 2 stretches are compositionally biased toward basic and acidic residues: residues 480–490 and 504–515; these read NHTEVKEEFHH and KKDDQRYNSEFY. Positions 617–677 constitute a Tudor domain; it reads SWRPGDECLA…RPIQAEAWEE (61 aa). The tract at residues 678 to 710 is disordered; it reads EGDFGDFRRGGDGQPRRSTRPTQQFYQPPRARN. A compositionally biased stretch (basic and acidic residues) spans 682–692; that stretch reads GDFRRGGDGQP.

As to quaternary structure, component of mRNA stress granules.

The protein resides in the cytoplasm. Its subcellular location is the nucleus. Its function is as follows. Scaffolding protein that specifically recognizes and binds dimethylarginine-containing proteins. Plays a role in the regulation of translation of target mRNAs by binding Arg/Gly-rich motifs (GAR) in dimethylarginine-containing proteins. In nucleus, acts as a coactivator: recognizes and binds asymmetric dimethylation on the core histone tails associated with transcriptional activation (H3R17me2a and H4R3me2a) and recruits proteins at these arginine-methylated loci. In cytoplasm, acts as an antiviral factor that participates in the assembly of stress granules together with G3BP1. This chain is Tudor domain-containing protein 3 (tdrd3), found in Xenopus tropicalis (Western clawed frog).